We begin with the raw amino-acid sequence, 419 residues long: Ribosome biogenesis protein NOP53 (419 aa).

2 disordered regions span residues 1 to 21 and 233 to 283; these read MGIK…KNKR and KAFE…KIRQ. A compositionally biased stretch (basic and acidic residues) spans 233–261; sequence KAFEDKGLVSDQDVNHSIDSDDQSEHEQA. S242, S249, S252, and S256 each carry phosphoserine. The span at 269 to 283 shows a compositional bias: basic residues; the sequence is KNKRKTRSQRNKIRQ.

This sequence belongs to the NOP53 family.

Its subcellular location is the nucleus. The protein localises to the nucleolus. It is found in the nucleoplasm. Functionally, may play a role in ribosome biogenesis. The sequence is that of Ribosome biogenesis protein NOP53 from Schizosaccharomyces pombe (strain 972 / ATCC 24843) (Fission yeast).